Consider the following 62-residue polypeptide: Large ribosomal subunit protein eL37 (62 aa).

Cys-20, Cys-23, Cys-35, and Cys-38 together coordinate Zn(2+). A C4-type zinc finger spans residues Cys-20–Cys-38.

The protein belongs to the eukaryotic ribosomal protein eL37 family. The cofactor is Zn(2+).

Binds to the 23S rRNA. The protein is Large ribosomal subunit protein eL37 (rpl37e) of Aeropyrum pernix (strain ATCC 700893 / DSM 11879 / JCM 9820 / NBRC 100138 / K1).